A 399-amino-acid chain; its full sequence is Succinate--CoA ligase [ADP-forming] subunit beta (399 aa).

The ATP-grasp domain occupies Lys9 to Glu254. ATP is bound by residues Lys46, Gly53–Gly55, Glu109, Ala112, and Glu117. The Mg(2+) site is built by Asn209 and Asp223. Substrate-binding positions include Asn274 and Gly331–Met333.

This sequence belongs to the succinate/malate CoA ligase beta subunit family. As to quaternary structure, heterotetramer of two alpha and two beta subunits. Requires Mg(2+) as cofactor.

The enzyme catalyses succinate + ATP + CoA = succinyl-CoA + ADP + phosphate. The catalysed reaction is GTP + succinate + CoA = succinyl-CoA + GDP + phosphate. It participates in carbohydrate metabolism; tricarboxylic acid cycle; succinate from succinyl-CoA (ligase route): step 1/1. Succinyl-CoA synthetase functions in the citric acid cycle (TCA), coupling the hydrolysis of succinyl-CoA to the synthesis of either ATP or GTP and thus represents the only step of substrate-level phosphorylation in the TCA. The beta subunit provides nucleotide specificity of the enzyme and binds the substrate succinate, while the binding sites for coenzyme A and phosphate are found in the alpha subunit. The sequence is that of Succinate--CoA ligase [ADP-forming] subunit beta from Caulobacter vibrioides (strain NA1000 / CB15N) (Caulobacter crescentus).